A 150-amino-acid chain; its full sequence is Deoxyuridine 5'-triphosphate nucleotidohydrolase (150 aa).

Substrate contacts are provided by residues 69 to 71, asparagine 82, 86 to 88, and lysine 96; these read RSG and LID.

Belongs to the dUTPase family. It depends on Mg(2+) as a cofactor.

It catalyses the reaction dUTP + H2O = dUMP + diphosphate + H(+). Its pathway is pyrimidine metabolism; dUMP biosynthesis; dUMP from dCTP (dUTP route): step 2/2. In terms of biological role, this enzyme is involved in nucleotide metabolism: it produces dUMP, the immediate precursor of thymidine nucleotides and it decreases the intracellular concentration of dUTP so that uracil cannot be incorporated into DNA. The chain is Deoxyuridine 5'-triphosphate nucleotidohydrolase from Neisseria gonorrhoeae (strain ATCC 700825 / FA 1090).